The sequence spans 874 residues: Coatomer subunit gamma-1 (874 aa).

Residues 1–11 (MLKKFDKKDEE) are compositionally biased toward basic and acidic residues. Residues 1 to 21 (MLKKFDKKDEESGGGSNPLQH) form a disordered region. HEAT repeat units lie at residues 64-101 (TEAT…IAED), 283-320 (KELA…KHPS), 322-355 (VTAC…GSES), and 356-392 (SIDR…KYPR). T594 bears the Phosphothreonine mark. The tract at residues 609 to 874 (RQEIFQEQLA…PVDIILASVG (266 aa)) is interaction with ZNF289/ARFGAP2.

Belongs to the COPG family. In terms of assembly, oligomeric complex that consists of at least the alpha, beta, beta', gamma, delta, epsilon and zeta subunits. Interacts with ZNF289/ARFGAP2 through its C-terminal appendage domain. Interacts with EGFR upon EGF treatment; interaction is essential for regulation of EGF-dependent nuclear transport of EGFR by retrograde trafficking from the Golgi to the ER. The coatomer interacts with KDEL receptors; the interaction is important for retrograde trafficking of KDEL-bearing proteins from the Golgi to the endoplasmic reticulum. Interacts with COPB1. Interacts with TMED10 (via C-terminus). Interacts with TMED2, TMED3, TMED7 and TMED9.

It localises to the cytoplasm. The protein localises to the cytosol. Its subcellular location is the golgi apparatus membrane. The protein resides in the cytoplasmic vesicle. It is found in the COPI-coated vesicle membrane. Its function is as follows. The coatomer is a cytosolic protein complex that binds to dilysine motifs and reversibly associates with Golgi non-clathrin-coated vesicles, which further mediate biosynthetic protein transport from the ER, via the Golgi up to the trans Golgi network. Coatomer complex is required for budding from Golgi membranes, and is essential for the retrograde Golgi-to-ER transport of dilysine-tagged proteins. In mammals, the coatomer can only be recruited by membranes associated to ADP-ribosylation factors (ARFs), which are small GTP-binding proteins; the complex also influences the Golgi structural integrity, as well as the processing, activity, and endocytic recycling of LDL receptors. Required for limiting lipid storage in lipid droplets. Involved in lipid homeostasis by regulating the presence of perilipin family members PLIN2 and PLIN3 at the lipid droplet surface and promoting the association of adipocyte triglyceride lipase (PNPLA2) with the lipid droplet surface to mediate lipolysis. This is Coatomer subunit gamma-1 (Copg1) from Mus musculus (Mouse).